The following is a 418-amino-acid chain: MTNSIEQAWDLAKQRFAAVGVDVDAALTRLDTLPVSMHCWQGDDVTGFEDPDGVLTGGIQATGNYPGKARNATELRSDLELALALIPGPKRLNLHAIYLESDTSVARNKIEPRHFSHWVAWAKKHQLGLDFNPSCFSHPLSADGFTLSHADPEIRQFWIEHCQASRRISAYFGEQLGTPSVMNIWIPDGMKDTPIDRLAPRQRLLSALDEVISEKLNPAHHIDAVESKLFGIGAESYTVGSNEFYMGYAASRQTALCLDAGHFHPTEVISDKISSAMLYVPRLLLHVSRPVRWDSDHVVLLDDETQAIASEIIRHNLFDRVHIGLDFFDASINRIAAWVIGTRNMKKALLRALLEPTDMLRQLELRGDYTARLALLEEQKSLPWQAIWEGYCQRNDVPVDARWLDAVREYEQQILSQR.

The Mn(2+) site is built by H262, D294, and D296.

It belongs to the rhamnose isomerase family. Homotetramer. Mn(2+) is required as a cofactor.

The protein localises to the cytoplasm. It catalyses the reaction L-rhamnopyranose = L-rhamnulose. It functions in the pathway carbohydrate degradation; L-rhamnose degradation; glycerone phosphate from L-rhamnose: step 1/3. Its function is as follows. Catalyzes the interconversion of L-rhamnose and L-rhamnulose. In Yersinia pseudotuberculosis serotype IB (strain PB1/+), this protein is L-rhamnose isomerase.